We begin with the raw amino-acid sequence, 450 residues long: Probable malate:quinone oxidoreductase (450 aa).

It belongs to the MQO family. Requires FAD as cofactor.

It carries out the reaction (S)-malate + a quinone = a quinol + oxaloacetate. Its pathway is carbohydrate metabolism; tricarboxylic acid cycle; oxaloacetate from (S)-malate (quinone route): step 1/1. The chain is Probable malate:quinone oxidoreductase from Helicobacter acinonychis (strain Sheeba).